Here is a 453-residue protein sequence, read N- to C-terminus: Secreted exoenzyme S (453 aa).

The region spanning 96 to 229 (SSAVVFKQMV…LRQAVESEVS (134 aa)) is the Bacterial Rho-GAP domain. The TR mART core domain maps to 239-414 (DGLVKRFGAD…RVLEEAALGE (176 aa)). Residues R319, S343, and E381 contribute to the active site.

It is found in the secreted. It carries out the reaction L-arginyl-[protein] + NAD(+) = N(omega)-(ADP-D-ribosyl)-L-arginyl-[protein] + nicotinamide + H(+). In terms of biological role, bifunctional effector protein that is secreted and delivered by the type III secretion system into eukaryotic target cells. ADP-ribosylates several eukaryotic proteins including ezrin/radixin/moesin (ERM), cyclophilin A and several members of the Ras superfamily. Host Ras ADP-ribosylation blocks its activation by its guanine nucleotide exchange factor, thereby interfering with Ras-mediated signal transduction. For instance, prevents Ras from interacting with and activating phosphoinositol-3-kinase (PI3K), which is required to stimulate the phagocytic NADPH-oxidase that generates reactive oxygen species. The TR mART core domain also contributes to bacterial dissemination to the blood during pneumonia. In addition to this activity, acts via its N-terminal region as a GTPase-activating protein (GAP) for host Rho GTPases including RhoA, Rac1, Cdc42 and Ras. The bacterial Rho-GAP domain activity induces mitochondrial disruption in the target host cell by activating host caspases 3 and 9 that execute cellular death. The protein is Secreted exoenzyme S (exoS) of Pseudomonas aeruginosa (strain ATCC 15692 / DSM 22644 / CIP 104116 / JCM 14847 / LMG 12228 / 1C / PRS 101 / PAO1).